The sequence spans 492 residues: Bifunctional protein GlmU (492 aa).

A pyrophosphorylase region spans residues 1–241 (MTFRGDTAVV…SALVAGVNDR (241 aa)). UDP-N-acetyl-alpha-D-glucosamine contacts are provided by residues 12 to 15 (LAAG), Lys-26, Gln-83, and 88 to 89 (GT). Asp-114 is a Mg(2+) binding site. UDP-N-acetyl-alpha-D-glucosamine is bound by residues Gly-151, Glu-166, Asn-181, and Asn-239. Asn-239 is a binding site for Mg(2+). The interval 242-262 (VQLAQLGAELNRRIVAAHQMA) is linker. The interval 263–492 (GVTVIDPATT…TPPPDADQTP (230 aa)) is N-acetyltransferase. Arg-344 and Lys-362 together coordinate UDP-N-acetyl-alpha-D-glucosamine. His-374 acts as the Proton acceptor in catalysis. Residues Tyr-377 and Asn-388 each coordinate UDP-N-acetyl-alpha-D-glucosamine. Acetyl-CoA is bound by residues Ala-391, 397–398 (NY), and Ala-434. The segment at 451 to 492 (GGPQRNIEDWVQQKRPGTPSAEAARKASAEQSTPPPDADQTP) is disordered. Residues 483–492 (TPPPDADQTP) are compositionally biased toward pro residues.

It in the N-terminal section; belongs to the N-acetylglucosamine-1-phosphate uridyltransferase family. This sequence in the C-terminal section; belongs to the transferase hexapeptide repeat family. In terms of assembly, homotrimer. It depends on Mg(2+) as a cofactor.

The protein localises to the cytoplasm. The catalysed reaction is alpha-D-glucosamine 1-phosphate + acetyl-CoA = N-acetyl-alpha-D-glucosamine 1-phosphate + CoA + H(+). The enzyme catalyses N-acetyl-alpha-D-glucosamine 1-phosphate + UTP + H(+) = UDP-N-acetyl-alpha-D-glucosamine + diphosphate. It participates in nucleotide-sugar biosynthesis; UDP-N-acetyl-alpha-D-glucosamine biosynthesis; N-acetyl-alpha-D-glucosamine 1-phosphate from alpha-D-glucosamine 6-phosphate (route II): step 2/2. It functions in the pathway nucleotide-sugar biosynthesis; UDP-N-acetyl-alpha-D-glucosamine biosynthesis; UDP-N-acetyl-alpha-D-glucosamine from N-acetyl-alpha-D-glucosamine 1-phosphate: step 1/1. Its pathway is bacterial outer membrane biogenesis; LPS lipid A biosynthesis. Its function is as follows. Catalyzes the last two sequential reactions in the de novo biosynthetic pathway for UDP-N-acetylglucosamine (UDP-GlcNAc). The C-terminal domain catalyzes the transfer of acetyl group from acetyl coenzyme A to glucosamine-1-phosphate (GlcN-1-P) to produce N-acetylglucosamine-1-phosphate (GlcNAc-1-P), which is converted into UDP-GlcNAc by the transfer of uridine 5-monophosphate (from uridine 5-triphosphate), a reaction catalyzed by the N-terminal domain. The chain is Bifunctional protein GlmU from Mycobacterium marinum (strain ATCC BAA-535 / M).